We begin with the raw amino-acid sequence, 527 residues long: MASSQLAKEIAKRRTFAIISHPDAGKTTITEKLLLFGNAIQLAGSVKGKRGPHAKSDWMTMEQERGISVTSSVMQFPYKERVVNLLDTPGHEDFSEDTYRTLTAVDSVLMVIDGAKGVEDRTIKLMEVCRLRDTPILSFINKMDRDIRDPVEVMDEIEDVLKIAAAPINWPIGMGKEFKGVYNLYTDTIHLYEHGQGHTIPEDIQIKGLDSEEASALLGAYAEDVREEIELVRGATHEFDLDAYHAGELTPVFFGTALGNFGVREMLDGFVEWAPAPLDRDTAERKVAADEDKFSGFIFKIQANMDPKHRDRIAFMRVCSGRYSQGMKMRHVRLGKDVKIADAVTFLAGDRSQVEEAISGDIIGLHNHGTIQIGDTFSSGEILKFTGIPHFAPELFRRIRLKDPLKTKQLQRGLQQLSEEGSTQVFFPLNNNDIVVGAVGVLQFEVVAYRLKDEYKVEAIYEPVNVNTARWVDCSDDKKLAEFKRKCSDNLALDGGGHLTYLAPTRVNLSLSEERYPDVAFRATREH.

The 268-residue stretch at 11–278 (AKRRTFAIIS…GFVEWAPAPL (268 aa)) folds into the tr-type G domain. GTP-binding positions include 20–27 (SHPDAGKT), 87–91 (DTPGH), and 141–144 (NKMD).

This sequence belongs to the TRAFAC class translation factor GTPase superfamily. Classic translation factor GTPase family. PrfC subfamily.

Its subcellular location is the cytoplasm. Increases the formation of ribosomal termination complexes and stimulates activities of RF-1 and RF-2. It binds guanine nucleotides and has strong preference for UGA stop codons. It may interact directly with the ribosome. The stimulation of RF-1 and RF-2 is significantly reduced by GTP and GDP, but not by GMP. In Teredinibacter turnerae (strain ATCC 39867 / T7901), this protein is Peptide chain release factor 3.